The sequence spans 187 residues: Protein TIFY 11b (187 aa).

In terms of domain architecture, Tify spans 68 to 103 (ATAPAAPLTIFYGGRMVVFEDFPADKAAEVMRMASS). The Jas motif lies at 121 to 145 (PIMRKASLQRFFAKRKDRLAATTPY). Positions 123–130 (MRKASLQR) match the Nuclear localization signal motif. Residues 139 to 168 (LAATTPYARPSPAETKASEPEEKKTPTSWL) form a disordered region. Basic and acidic residues predominate over residues 154–163 (KASEPEEKKT).

It belongs to the TIFY/JAZ family. As to quaternary structure, interacts with COI1B in a coronatine-dependent manner. Coronatine is an analog of jasmonoyl isoleucine (JA-Ile). In terms of processing, ubiquitinated. Targeted for degradation by the SCF(COI1) E3 ubiquitin ligase-proteasome pathway during jasmonate signaling.

It is found in the nucleus. Functionally, repressor of jasmonate responses. The protein is Protein TIFY 11b of Oryza sativa subsp. japonica (Rice).